Reading from the N-terminus, the 110-residue chain is uncharacterized protein (110 aa).

To M.jannaschii MJ0123 and A.aeolicus AA15.

This is an uncharacterized protein from Methanocaldococcus jannaschii (strain ATCC 43067 / DSM 2661 / JAL-1 / JCM 10045 / NBRC 100440) (Methanococcus jannaschii).